A 394-amino-acid chain; its full sequence is Elongation factor Tu-A (394 aa).

Positions 10 to 204 constitute a tr-type G domain; it reads KPHVNVGTIG…HLDTYIPEPQ (195 aa). A G1 region spans residues 19-26; it reads GHVDHGKT. Residue 19–26 participates in GTP binding; it reads GHVDHGKT. T26 lines the Mg(2+) pocket. The tract at residues 60–64 is G2; the sequence is GITIN. Positions 81-84 are G3; the sequence is DCPG. GTP-binding positions include 81 to 85 and 136 to 139; these read DCPGH and NKCD. The segment at 136–139 is G4; the sequence is NKCD. The tract at residues 174-176 is G5; the sequence is SAL.

This sequence belongs to the TRAFAC class translation factor GTPase superfamily. Classic translation factor GTPase family. EF-Tu/EF-1A subfamily. Monomer.

The protein localises to the cytoplasm. It catalyses the reaction GTP + H2O = GDP + phosphate + H(+). Functionally, GTP hydrolase that promotes the GTP-dependent binding of aminoacyl-tRNA to the A-site of ribosomes during protein biosynthesis. This Pasteurella multocida (strain Pm70) protein is Elongation factor Tu-A.